The sequence spans 257 residues: UPF0246 protein YaaA (257 aa).

It belongs to the UPF0246 family.

The sequence is that of UPF0246 protein YaaA from Salmonella agona (strain SL483).